The primary structure comprises 4115 residues: Transcription-associated protein 1 (4115 aa).

Polar residues predominate over residues 1-11; sequence MDPSIPSTSHR. Disordered stretches follow at residues 1-21 and 543-563; these read MDPS…GVQP and ESEQ…KKTS. Positions 544-563 are enriched in basic and acidic residues; the sequence is SEQKRNELPTPTKEHTKKTS. 2 TPR repeats span residues 1341–1374 and 1820–1853; these read LDGL…LLDL and QDYD…EVIP. Residues 2678 to 2701 form a disordered region; it reads LEEPEPMEVDQPKNAPAEEPKDNK. Residues 2808–3421 enclose the FAT domain; the sequence is LIEFISSKHE…SNGASKVSKS (614 aa). The TPR 3 repeat unit spans residues 2855–2888; the sequence is IETLESLGALYKELAEFDQYSAIWERRSVFPETM. Positions 3740-4100 constitute a PI3K/PI4K catalytic domain; it reads EPYFEIVMRG…CNSLIIRAKD (361 aa). Residues 3746–3752 are G-loop; it reads VMRGGQV. The catalytic loop stretch occupies residues 3959 to 3967; the sequence is NLSPMTPHQ. The activation loop stretch occupies residues 3979–4006; it reads NPFYRFELGTGQLMDIEHFAHEVPFRLT. The 33-residue stretch at 4083 to 4115 folds into the FATC domain; it reads DAKVKKDDCNSLIIRAKDSDNLSRMPPTYHAWF.

It belongs to the PI3/PI4-kinase family. TRA1 subfamily.

Its subcellular location is the nucleus. In terms of biological role, influences germ cell fate in hermaphrodites. Acts downstream of tra-2 and tra-3 and through the Tip60 histone acetyltransferase complex to regulate germ cell fate decisions. Required for spermatogenesis and embryonic development. Acts with tra-2 to promote expression of fog-3 and control male tail development. Involved in the negative regulation of vulval development. The chain is Transcription-associated protein 1 from Caenorhabditis briggsae.